The following is a 153-amino-acid chain: FAD synthase (153 aa).

ATP-binding positions include 9–10 (TF), 14–17 (HPGH), aspartate 97, and tyrosine 124.

The protein belongs to the archaeal FAD synthase family. Homodimer. Requires a divalent metal cation as cofactor.

It catalyses the reaction FMN + ATP + H(+) = FAD + diphosphate. It participates in cofactor biosynthesis; FAD biosynthesis; FAD from FMN: step 1/1. In terms of biological role, catalyzes the transfer of the AMP portion of ATP to flavin mononucleotide (FMN) to produce flavin adenine dinucleotide (FAD) coenzyme. This Methanobrevibacter smithii (strain ATCC 35061 / DSM 861 / OCM 144 / PS) protein is FAD synthase.